The following is a 228-amino-acid chain: Vesicle transport protein SEC20 (228 aa).

The Cytoplasmic segment spans residues 1–199 (MAAPQDVHVR…LITKYNRREL (199 aa)). Residues 37-90 (LSALTELNTKVKEKFQQLRHRIQDLEQLAKEQDKESEKQLLLQEVENHKKQMLS) adopt a coiled-coil conformation. Residues 200–220 (TDKLLIFLALALFLATVLYIV) form a helical; Anchor for type IV membrane protein membrane-spanning segment. The Lumenal segment spans residues 221-228 (KKRLFPFL).

Belongs to the SEC20 family. As to quaternary structure, component of a SNARE complex consisting of STX18, USE1L, BNIP1/SEC20L and SEC22B. Interacts directly with STX18, RINT1/TIP20L and NAPA. Interacts with ZW10 through RINT1. Interacts with BCL2. Interacts with RNF186. Interacts with RNF185. Interacts with SQSTM1; increased by 'Lys-63'-linked polyubiquitination of BNIP1. (Microbial infection) Interacts with adenovirus E1B 19K protein; plays a role in the suppression of cell apoptosis by the viral protein. In terms of processing, polyubiquitinated. 'Lys-63'-linked polyubiquitination by RNF185 increases the interaction with the autophagy receptor SQSTM1. Undergoes 'Lys-29'- and 'Lys-63'-linked polyubiquitination by RNF186 that may regulate BNIP1 localization to the mitochondrion. Isoform 1 is highly expressed in heart, brain, liver skeletal muscle and pancreas. Isoform 3 is moderately expressed in placenta, lung and kidney. Isoform 4 is highly expressed in testis and small intestine.

It localises to the endoplasmic reticulum membrane. The protein localises to the mitochondrion membrane. As part of a SNARE complex may be involved in endoplasmic reticulum membranes fusion and be required for the maintenance of endoplasmic reticulum organization. Also plays a role in apoptosis. It is for instance required for endoplasmic reticulum stress-induced apoptosis. As a substrate of RNF185 interacting with SQSTM1, might also be involved in mitochondrial autophagy. The chain is Vesicle transport protein SEC20 (BNIP1) from Homo sapiens (Human).